Reading from the N-terminus, the 410-residue chain is O-methyltransferase afvC (410 aa).

S-adenosyl-L-methionine contacts are provided by residues 253-254, D278, 299-300, and R315; these read GG and DF. The Proton acceptor role is filled by H319.

The protein belongs to the class I-like SAM-binding methyltransferase superfamily. Cation-independent O-methyltransferase family. COMT subfamily.

Its pathway is secondary metabolite biosynthesis. Functionally, O-methyltransferase; part of the gene cluster that mediates the biosynthesis of aflavarin, a bicoumarin that exhibits anti-insectan activity against the fungivorous beetle C.hemipterus. This is O-methyltransferase afvC from Aspergillus flavus (strain ATCC 200026 / FGSC A1120 / IAM 13836 / NRRL 3357 / JCM 12722 / SRRC 167).